The primary structure comprises 256 residues: Nuclear shuttle protein (256 aa).

The short motif at 21–42 is the Bipartite nuclear localization signal element; the sequence is NYGFKRTFVVKRGDAKRRQTQV. Residues 81 to 96 carry the Nuclear localization signal motif; sequence QLCKTQPNRSRSYIKL. The interaction with Arabidopsis thaliana NSI protein stretch occupies residues 150–187; it reads ELFGARIHSLGNLAVTPALKERFYILHVLKRVISVEKD.

The protein belongs to the begomovirus nuclear shuttle protein family. Binds to single-stranded and double-stranded viral DNA. Interacts with the host nuclear shuttle interacting (NSI) protein. This interaction may allow NSP to recruit NSI monomers to the viral genome and thus regulate nuclear export of viral genome by NSP.

It is found in the host nucleus. Its subcellular location is the host cytoplasm. The protein resides in the host cell membrane. Binds to the genomic viral ssDNA, shuttles it into and out of the cell nucleus. Begomoviruses use 2 proteins to transport their DNA from cell to cell. The nuclear shuttle protein (NSP) shuttles it between nucleus and cytoplasm and the movement protein (MP) probably transports the DNA-NSP complex to the cell periphery and facilitates movement across the cell wall. This is Nuclear shuttle protein from Pepper huasteco yellow vein virus (PHYVV).